Here is an 860-residue protein sequence, read N- to C-terminus: Leucine-rich repeat and death domain-containing protein 1 (860 aa).

Positions 1 to 103 (MSEKEGMSEV…TGTSQSLSSL (103 aa)) are disordered. Residues 50-72 (KSSNQIYETHPRQNTLESTSSSG) are compositionally biased toward polar residues. Residues 90-103 (TSTRTGTSQSLSSL) show a composition bias toward low complexity. LRR repeat units lie at residues 139 to 163 (LGAD…ILKI), 164 to 186 (KYVK…DSGD), 187 to 210 (LLGL…IQLL), 211 to 233 (HNLR…ISQL), 235 to 256 (NIRQ…LECL), 257 to 279 (GNLE…LPSL), 281 to 302 (TLRV…LCFL), 303 to 325 (PKLI…IREL), 326 to 348 (KNLE…IFQL), 350 to 371 (KIKE…IENF), 372 to 394 (RELR…ISCC), 396 to 417 (MLEC…IHKL), 419 to 440 (NLRK…ISHL), 441 to 463 (NNIC…IKNC), 465 to 486 (KIIK…LCAL), 487 to 510 (DSLY…SFSK), 512 to 532 (LLHL…FCSL), 533 to 555 (INLK…ISNM), 557 to 578 (SLHV…LCTL), 579 to 601 (ENLQ…ICNL), 603 to 624 (GIQK…LCQL), 627 to 650 (LEQL…LSNM), 651 to 673 (TQLK…IGEL), 675 to 696 (NLVS…LLSL), 697 to 719 (NDLQ…IYNI), and 721 to 742 (SLKE…ICKG). The 89-residue stretch at 764–852 (EKIFKIVANN…EIMDKITALN (89 aa)) folds into the Death domain. An LRR 27 repeat occupies 856–860 (RAIKF).

The sequence is that of Leucine-rich repeat and death domain-containing protein 1 (LRRD1) from Homo sapiens (Human).